Consider the following 421-residue polypeptide: Ethanolamine-phosphate cytidylyltransferase (421 aa).

Residues 8–28 traverse the membrane as a helical segment; the sequence is IVGSCIVGGAAFAVGASFLHL. The interval 203–227 is disordered; it reads SRSSLQRQFSHGHSSPKFEDGASSA. Positions 204 to 215 are enriched in polar residues; the sequence is RSSLQRQFSHGH. CTP contacts are provided by residues 262–263, 270–273, R298, 346–349, and 377–381; these read AF, HVEI, HGTV, and SPLDI. Positions 402 to 421 are disordered; the sequence is AKKEASEKKYYEQKSFVSGD. The segment covering 403 to 413 has biased composition (basic and acidic residues); that stretch reads KKEASEKKYYE. At S416 the chain carries Phosphoserine.

Belongs to the cytidylyltransferase family. In terms of tissue distribution, expressed in root tip, lateral root primordia, leaves, shoot apex, stem vascular bundles, pollen and embryos.

It is found in the mitochondrion outer membrane. The enzyme catalyses phosphoethanolamine + CTP + H(+) = CDP-ethanolamine + diphosphate. The protein operates within phospholipid metabolism; phosphatidylethanolamine biosynthesis; phosphatidylethanolamine from ethanolamine: step 2/3. Its function is as follows. Plays an important role in the biosynthesis of the phospholipid phosphatidylethanolamine. Catalyzes the formation of CDP-ethanolamine. Essential for early embryonic development. This is Ethanolamine-phosphate cytidylyltransferase from Arabidopsis thaliana (Mouse-ear cress).